The following is a 93-amino-acid chain: Protein translocase subunit SecE (93 aa).

Positions 1 to 33 (MTDALGSIDMPDAEDETREKKARKGGKRGKKGP) are disordered. A compositionally biased stretch (basic residues) spans 20–33 (KKARKGGKRGKKGP). Residues 64 to 84 (TVVIVFVVIMIGLVTVIDFGF) form a helical membrane-spanning segment.

Belongs to the SecE/SEC61-gamma family. Component of the Sec protein translocase complex. Heterotrimer consisting of SecY, SecE and SecG subunits. The heterotrimers can form oligomers, although 1 heterotrimer is thought to be able to translocate proteins. Interacts with the ribosome. Interacts with SecDF, and other proteins may be involved. Interacts with SecA.

Its subcellular location is the cell membrane. Functionally, essential subunit of the Sec protein translocation channel SecYEG. Clamps together the 2 halves of SecY. May contact the channel plug during translocation. This Streptomyces virginiae (Streptomyces cinnamonensis) protein is Protein translocase subunit SecE.